The following is a 203-amino-acid chain: Akirin-2 (203 aa).

2 positions are modified to phosphoserine: Ser18 and Ser21. Residues 22 to 27 carry the Nuclear localization signal motif; that stretch reads PKRRRC. Ser57 carries the post-translational modification Phosphoserine. Positions 200–203 match the SYVS motif motif; the sequence is SYVS.

The protein belongs to the akirin family. As to quaternary structure, homodimer. Interacts with IPO9; the interaction is direct. Associates (via SYVS motif) with 20S and 26S proteasomes. Interacts with SMARCD1; promoting SWI/SNF complex recruitment. Interacts with NFKBIZ. Interacts with YWHAB. Post-translationally, polyubiquitinated. Polyubiquitination is dependent of UBR5 that extends pre-ubiquitinated AKIRIN2. In terms of tissue distribution, widely expressed with the highest expression in peripheral blood leukocytes.

The protein localises to the nucleus. It is found in the cytoplasm. It localises to the membrane. Functionally, molecular adapter that acts as a bridge between a variety of multiprotein complexes, and which is involved in embryonic development, immunity, myogenesis and brain development. Plays a key role in nuclear protein degradation by promoting import of proteasomes into the nucleus: directly binds to fully assembled 20S proteasomes at one end and to nuclear import receptor IPO9 at the other end, bridging them together and mediating the import of pre-assembled proteasome complexes through the nuclear pore. Involved in innate immunity by regulating the production of interleukin-6 (IL6) downstream of Toll-like receptor (TLR): acts by bridging the NF-kappa-B inhibitor NFKBIZ and the SWI/SNF complex, leading to promote induction of IL6. Also involved in adaptive immunity by promoting B-cell activation. Involved in brain development: required for the survival and proliferation of cerebral cortical progenitor cells. Involved in myogenesis: required for skeletal muscle formation and skeletal development, possibly by regulating expression of muscle differentiation factors. Also plays a role in facilitating interdigital tissue regression during limb development. In Homo sapiens (Human), this protein is Akirin-2.